The primary structure comprises 152 residues: Early glycoprotein GP48 (152 aa).

The signal sequence occupies residues 1 to 25 (MVMMLRTWRLLPMVLLAAYCYCVFG). 9 N-linked (GlcNAc...) asparagine; by host glycosylation sites follow: asparagine 48, asparagine 53, asparagine 61, asparagine 69, asparagine 108, asparagine 112, asparagine 122, asparagine 139, and asparagine 148.

This sequence belongs to the RL11 family. Post-translationally, N-glycosylated and possibly O-glycosylated.

The protein resides in the virion membrane. The polypeptide is Early glycoprotein GP48 (UL4) (Homo sapiens (Human)).